The chain runs to 466 residues: L-seryl-tRNA(Sec) selenium transferase (466 aa).

At Lys292 the chain carries N6-(pyridoxal phosphate)lysine.

This sequence belongs to the SelA family. Requires pyridoxal 5'-phosphate as cofactor.

The protein resides in the cytoplasm. It carries out the reaction L-seryl-tRNA(Sec) + selenophosphate + H(+) = L-selenocysteinyl-tRNA(Sec) + phosphate. Its pathway is aminoacyl-tRNA biosynthesis; selenocysteinyl-tRNA(Sec) biosynthesis; selenocysteinyl-tRNA(Sec) from L-seryl-tRNA(Sec) (bacterial route): step 1/1. Converts seryl-tRNA(Sec) to selenocysteinyl-tRNA(Sec) required for selenoprotein biosynthesis. This is L-seryl-tRNA(Sec) selenium transferase from Rhizobium meliloti (strain 1021) (Ensifer meliloti).